The following is a 395-amino-acid chain: Elongation factor Tu (395 aa).

The 195-residue stretch at 10–204 (KPHVNVGTIG…AVDAYIDTPL (195 aa)) folds into the tr-type G domain. The interval 19 to 26 (GHVDHGKT) is G1. Residue 19–26 (GHVDHGKT) coordinates GTP. Residue threonine 26 coordinates Mg(2+). Positions 60–64 (GITIN) are G2. The interval 81–84 (DCPG) is G3. Residues 81–85 (DCPGH) and 136–139 (NKAD) contribute to the GTP site. Residues 136-139 (NKAD) are G4. Residues 174–176 (SAL) form a G5 region.

This sequence belongs to the TRAFAC class translation factor GTPase superfamily. Classic translation factor GTPase family. EF-Tu/EF-1A subfamily. As to quaternary structure, monomer.

The protein localises to the cytoplasm. The catalysed reaction is GTP + H2O = GDP + phosphate + H(+). In terms of biological role, GTP hydrolase that promotes the GTP-dependent binding of aminoacyl-tRNA to the A-site of ribosomes during protein biosynthesis. The sequence is that of Elongation factor Tu from Acholeplasma laidlawii (strain PG-8A).